Consider the following 460-residue polypeptide: MKLWGGRFESGPGEVFERFSGSLDFDRRLIDCDIRGSQAFARALENVGILTATERAQIVEAFDSIRAESLSPAFYEGATDEDVHTLVIRKLKERAGAVADKIHTGRSRNEQVSLDTRMWLREESTDLQAQLFAVMGRLLDLAEMYPHAIIPGYTHMRRAQAVLWPHYLLAYFEMFLRDWHRFGDARRRANVLPLGSGALAGSGFPLDREAMAQNLGFEGITQNSMDVSGDRDFALDFLYACTVTMIHLSRLAEDWILYSSEEFGWLELGDGVTSGSSLMPQKKNPDSLELIRGKSGRVVGCLTSLLVTMKGLPMTYNRDMQEDKIPIFDAADQLSGSLLMTSAVIESTRLNPARPAAAAEESWVVATDLAEALARAGTPFHQAHQIVGRFVLESVRANKKPSDWTAEEMHAFAPEFTPDFAALLNPAEGMKSREIPGGTGTAAVAAALAHARQLLGKLIV.

The protein belongs to the lyase 1 family. Argininosuccinate lyase subfamily.

The protein localises to the cytoplasm. The catalysed reaction is 2-(N(omega)-L-arginino)succinate = fumarate + L-arginine. Its pathway is amino-acid biosynthesis; L-arginine biosynthesis; L-arginine from L-ornithine and carbamoyl phosphate: step 3/3. The chain is Argininosuccinate lyase from Solibacter usitatus (strain Ellin6076).